A 79-amino-acid polypeptide reads, in one-letter code: Virulence protein MsgA (79 aa).

It belongs to the DinI family.

Functionally, affects survival in macrophages. The polypeptide is Virulence protein MsgA (msgA) (Salmonella typhi).